The sequence spans 291 residues: N-acetylmannosamine kinase (291 aa).

Residues 5-12 (AIDIGGTK) and 132-139 (GVGGGVVC) each bind ATP. Zn(2+)-binding residues include H156, C166, C168, and C173.

The protein belongs to the ROK (NagC/XylR) family. NanK subfamily. In terms of assembly, homodimer.

It catalyses the reaction an N-acyl-D-mannosamine + ATP = an N-acyl-D-mannosamine 6-phosphate + ADP + H(+). The protein operates within amino-sugar metabolism; N-acetylneuraminate degradation; D-fructose 6-phosphate from N-acetylneuraminate: step 2/5. Catalyzes the phosphorylation of N-acetylmannosamine (ManNAc) to ManNAc-6-P. This chain is N-acetylmannosamine kinase, found in Salmonella typhi.